Consider the following 372-residue polypeptide: Queuine tRNA-ribosyltransferase (372 aa).

Asp92 acts as the Proton acceptor in catalysis. Substrate is bound by residues 92 to 96 (DSGGY), Asp146, Gln188, and Gly215. Positions 246–252 (GIGSLKE) are RNA binding. The Nucleophile role is filled by Asp265. The tract at residues 270–274 (TRLGR) is RNA binding; important for wobble base 34 recognition. Zn(2+) is bound by residues Cys303, Cys305, Cys308, and His334.

This sequence belongs to the queuine tRNA-ribosyltransferase family. In terms of assembly, homodimer. Within each dimer, one monomer is responsible for RNA recognition and catalysis, while the other monomer binds to the replacement base PreQ1. Zn(2+) is required as a cofactor.

The enzyme catalyses 7-aminomethyl-7-carbaguanine + guanosine(34) in tRNA = 7-aminomethyl-7-carbaguanosine(34) in tRNA + guanine. Its pathway is tRNA modification; tRNA-queuosine biosynthesis. In terms of biological role, catalyzes the base-exchange of a guanine (G) residue with the queuine precursor 7-aminomethyl-7-deazaguanine (PreQ1) at position 34 (anticodon wobble position) in tRNAs with GU(N) anticodons (tRNA-Asp, -Asn, -His and -Tyr). Catalysis occurs through a double-displacement mechanism. The nucleophile active site attacks the C1' of nucleotide 34 to detach the guanine base from the RNA, forming a covalent enzyme-RNA intermediate. The proton acceptor active site deprotonates the incoming PreQ1, allowing a nucleophilic attack on the C1' of the ribose to form the product. After dissociation, two additional enzymatic reactions on the tRNA convert PreQ1 to queuine (Q), resulting in the hypermodified nucleoside queuosine (7-(((4,5-cis-dihydroxy-2-cyclopenten-1-yl)amino)methyl)-7-deazaguanosine). The protein is Queuine tRNA-ribosyltransferase of Prochlorococcus marinus (strain AS9601).